The chain runs to 475 residues: Ribulose bisphosphate carboxylase large chain (475 aa).

Positions 1-2 (MS) are excised as a propeptide. Pro-3 is modified (N-acetylproline). Lys-14 carries the post-translational modification N6,N6,N6-trimethyllysine. Positions 123 and 173 each coordinate substrate. The active-site Proton acceptor is the Lys-175. Residue Lys-177 coordinates substrate. Lys-201, Asp-203, and Glu-204 together coordinate Mg(2+). Lys-201 is modified (N6-carboxylysine). The active-site Proton acceptor is His-294. Substrate contacts are provided by Arg-295, His-327, and Ser-379.

It belongs to the RuBisCO large chain family. Type I subfamily. As to quaternary structure, heterohexadecamer of 8 large chains and 8 small chains; disulfide-linked. The disulfide link is formed within the large subunit homodimers. Requires Mg(2+) as cofactor. In terms of processing, the disulfide bond which can form in the large chain dimeric partners within the hexadecamer appears to be associated with oxidative stress and protein turnover.

It localises to the plastid. The protein localises to the chloroplast. The enzyme catalyses 2 (2R)-3-phosphoglycerate + 2 H(+) = D-ribulose 1,5-bisphosphate + CO2 + H2O. It carries out the reaction D-ribulose 1,5-bisphosphate + O2 = 2-phosphoglycolate + (2R)-3-phosphoglycerate + 2 H(+). Its function is as follows. RuBisCO catalyzes two reactions: the carboxylation of D-ribulose 1,5-bisphosphate, the primary event in carbon dioxide fixation, as well as the oxidative fragmentation of the pentose substrate in the photorespiration process. Both reactions occur simultaneously and in competition at the same active site. The polypeptide is Ribulose bisphosphate carboxylase large chain (Magnolia macrophylla (Bigleaf magnolia)).